Consider the following 179-residue polypeptide: Large ribosomal subunit protein uL5 (179 aa).

Belongs to the universal ribosomal protein uL5 family. In terms of assembly, part of the 50S ribosomal subunit; part of the 5S rRNA/L5/L18/L25 subcomplex. Contacts the 5S rRNA and the P site tRNA. Forms a bridge to the 30S subunit in the 70S ribosome.

Its function is as follows. This is one of the proteins that bind and probably mediate the attachment of the 5S RNA into the large ribosomal subunit, where it forms part of the central protuberance. In the 70S ribosome it contacts protein S13 of the 30S subunit (bridge B1b), connecting the 2 subunits; this bridge is implicated in subunit movement. Contacts the P site tRNA; the 5S rRNA and some of its associated proteins might help stabilize positioning of ribosome-bound tRNAs. This is Large ribosomal subunit protein uL5 from Staphylococcus haemolyticus (strain JCSC1435).